The sequence spans 383 residues: uncharacterized protein (383 aa).

The protein belongs to the peptidase M20 family.

This is an uncharacterized protein from Staphylococcus epidermidis (strain ATCC 12228 / FDA PCI 1200).